The sequence spans 177 residues: Peptidyl-tRNA hydrolase (177 aa).

Y12 serves as a coordination point for tRNA. Catalysis depends on H17, which acts as the Proton acceptor. The tRNA site is built by F63, N65, and N111.

This sequence belongs to the PTH family. As to quaternary structure, monomer.

Its subcellular location is the cytoplasm. It catalyses the reaction an N-acyl-L-alpha-aminoacyl-tRNA + H2O = an N-acyl-L-amino acid + a tRNA + H(+). Its function is as follows. Hydrolyzes ribosome-free peptidyl-tRNAs (with 1 or more amino acids incorporated), which drop off the ribosome during protein synthesis, or as a result of ribosome stalling. Catalyzes the release of premature peptidyl moieties from peptidyl-tRNA molecules trapped in stalled 50S ribosomal subunits, and thus maintains levels of free tRNAs and 50S ribosomes. The chain is Peptidyl-tRNA hydrolase from Buchnera aphidicola subsp. Acyrthosiphon pisum (strain 5A).